The sequence spans 268 residues: Putative hydro-lyase PSPTO_5379 (268 aa).

It belongs to the D-glutamate cyclase family.

This Pseudomonas syringae pv. tomato (strain ATCC BAA-871 / DC3000) protein is Putative hydro-lyase PSPTO_5379.